Here is a 481-residue protein sequence, read N- to C-terminus: Polygalacturonase QRT3 (481 aa).

The N-terminal stretch at methionine 1–alanine 27 is a signal peptide. PbH1 repeat units lie at residues serine 203 to serine 226, glycine 261 to glycine 282, and isoleucine 356 to glutamine 377. Asparagine 415 and asparagine 455 each carry an N-linked (GlcNAc...) asparagine glycan.

Belongs to the glycosyl hydrolase 28 family. Expressed in the tapetum cells in the anthers and in the ovules of open flowers.

It localises to the secreted. Its subcellular location is the cell wall. It carries out the reaction (1,4-alpha-D-galacturonosyl)n+m + H2O = (1,4-alpha-D-galacturonosyl)n + (1,4-alpha-D-galacturonosyl)m.. In terms of biological role, polygalacturonase required for degrading the pollen mother cell wall during microspore development. The chain is Polygalacturonase QRT3 (QRT3) from Arabidopsis thaliana (Mouse-ear cress).